A 697-amino-acid chain; its full sequence is MTEQIKKTFLKAKEENKNVLVTFVTCGFPNVDETIKIMQGLQNGGAGIIELGIPFSDAVADGPTICKGNEIALKNNITLEKVFETVKLARDAGVTIPIILMGYYNPIFSYGDAKTIQKAKEVGANGFIIVDLPPEEAVGFREECKKQGVSFVPLVAPSTTDRRMELLASVADSFIYVVSRMGSTGSSATGVINTALPQLCQRVRKFAGDTPLAVGFGVNTSEHFHQVGSVSDGVVVGSKIIDLILKAEPGTAATVVEEYCKYLTKEDPSAPVPKQFQSGGSVATAPPAAVVEPINEMYLPQKYGMFGGMYVPEALTQCLVELESVFYKALHDEKFWEEFRSYYEYMGRPSALDYAKRLTEYCGGAHIWLKREDLNHGGSHKINNCIGQILLAKRLGKNRIIAETGAGQHGVATAICAAKFGMKCTIYMGAEDCRRQALNVFRIRLLGAEVVPVTSGTQTLRDAVNEALKAWVEQIDTTHYLIGSAIGPHPFPTIVKTFQSVIGEETKAQMQEKRKKLPDAVVACVGGGSNSIGMFSPFKADKSVMMLGCEAGGDGVDTPKHSATLTMGKVGVFHGVRTYVLQREDGQIQDTHSISAGLDYPGVGPELSELKYTNRAEFIAVTDAQCLEGFRALCHLEGIIPALESSHAVYGGMELAKKLPKDKDIVITISGRGDKDVQSVAEQLPILGPKIGWDLRF.

Residues 1 to 298 are tryptophan synthase alpha chain; that stretch reads MTEQIKKTFL…AVVEPINEMY (298 aa). Residues Glu-50 and Asp-61 each act as proton acceptor in the active site. The segment at 298–697 is tryptophan synthase beta chain; sequence YLPQKYGMFG…GPKIGWDLRF (400 aa). Lys-381 carries the post-translational modification N6-(pyridoxal phosphate)lysine.

This sequence in the N-terminal section; belongs to the TrpA family. In the C-terminal section; belongs to the TrpB family. Pyridoxal 5'-phosphate is required as a cofactor.

It catalyses the reaction (1S,2R)-1-C-(indol-3-yl)glycerol 3-phosphate + L-serine = D-glyceraldehyde 3-phosphate + L-tryptophan + H2O. The protein operates within amino-acid biosynthesis; L-tryptophan biosynthesis; L-tryptophan from chorismate: step 5/5. This chain is Tryptophan synthase (trp2), found in Schizosaccharomyces pombe (strain 972 / ATCC 24843) (Fission yeast).